The primary structure comprises 257 residues: NAD-capped RNA hydrolase NudC (257 aa).

R69 is a substrate binding site. Zn(2+) is bound by residues C98 and C101. E111 provides a ligand contact to substrate. C116 and C119 together coordinate Zn(2+). Y124 serves as a coordination point for substrate. A Nudix hydrolase domain is found at 125–248; the sequence is PQIAPCIIVA…TVARRLIEDT (124 aa). Residues A158, E174, and E178 each coordinate a divalent metal cation. A Nudix box motif is present at residues 159-180; the sequence is GFVEVGETLEQAVAREVMEESG. 192–199 is a binding site for substrate; it reads QPWPFPQS. E219 serves as a coordination point for a divalent metal cation. Substrate is bound at residue A241.

Belongs to the Nudix hydrolase family. NudC subfamily. In terms of assembly, homodimer. It depends on Mg(2+) as a cofactor. Mn(2+) is required as a cofactor. Requires Zn(2+) as cofactor.

It carries out the reaction a 5'-end NAD(+)-phospho-ribonucleoside in mRNA + H2O = a 5'-end phospho-adenosine-phospho-ribonucleoside in mRNA + beta-nicotinamide D-ribonucleotide + 2 H(+). The enzyme catalyses NAD(+) + H2O = beta-nicotinamide D-ribonucleotide + AMP + 2 H(+). The catalysed reaction is NADH + H2O = reduced beta-nicotinamide D-ribonucleotide + AMP + 2 H(+). In terms of biological role, mRNA decapping enzyme that specifically removes the nicotinamide adenine dinucleotide (NAD) cap from a subset of mRNAs by hydrolyzing the diphosphate linkage to produce nicotinamide mononucleotide (NMN) and 5' monophosphate mRNA. The NAD-cap is present at the 5'-end of some mRNAs and stabilizes RNA against 5'-processing. Has preference for mRNAs with a 5'-end purine. Catalyzes the hydrolysis of a broad range of dinucleotide pyrophosphates. The protein is NAD-capped RNA hydrolase NudC of Citrobacter koseri (strain ATCC BAA-895 / CDC 4225-83 / SGSC4696).